Reading from the N-terminus, the 155-residue chain is Protein FAM162A (155 aa).

A required for proapoptotic activity region spans residues 77-103; the sequence is RFKKEEEIPETISFEMLDAAKNKLRVK. The helical transmembrane segment at 104 to 121 threads the bilayer; it reads VSYLMIALTVAGCIYMVI.

Belongs to the UPF0389 family. Interacts with HSP90AB1; HSP90AB1 is essential for FAM162A mitochondrial localization and pro-apoptotic activity. Interacts with VDAC2; the interaction is probably involved in inducing mitochondrial permeability transition.

It is found in the mitochondrion membrane. Proposed to be involved in regulation of apoptosis; the exact mechanism may differ between cell types/tissues. May be involved in hypoxia-induced cell death of transformed cells implicating cytochrome C release and caspase activation (such as CASP9) and inducing mitochondrial permeability transition. May be involved in hypoxia-induced cell death of neuronal cells probably by promoting release of AIFM1 from mitochondria to cytoplasm and its translocation to the nucleus; however, the involvement of caspases has been reported conflictingly. The chain is Protein FAM162A (Fam162a) from Mus musculus (Mouse).